A 39-amino-acid chain; its full sequence is Large ribosomal subunit protein bL36 (39 aa).

This sequence belongs to the bacterial ribosomal protein bL36 family.

The protein is Large ribosomal subunit protein bL36 of Leuconostoc mesenteroides subsp. mesenteroides (strain ATCC 8293 / DSM 20343 / BCRC 11652 / CCM 1803 / JCM 6124 / NCDO 523 / NBRC 100496 / NCIMB 8023 / NCTC 12954 / NRRL B-1118 / 37Y).